A 123-amino-acid polypeptide reads, in one-letter code: UPF0102 protein CLD_2200 (123 aa).

It belongs to the UPF0102 family.

The polypeptide is UPF0102 protein CLD_2200 (Clostridium botulinum (strain Okra / Type B1)).